The chain runs to 292 residues: Bifunctional protein FolD (292 aa).

Residues 161-163 (GRS) and I231 contribute to the NADP(+) site.

It belongs to the tetrahydrofolate dehydrogenase/cyclohydrolase family. Homodimer.

The catalysed reaction is (6R)-5,10-methylene-5,6,7,8-tetrahydrofolate + NADP(+) = (6R)-5,10-methenyltetrahydrofolate + NADPH. The enzyme catalyses (6R)-5,10-methenyltetrahydrofolate + H2O = (6R)-10-formyltetrahydrofolate + H(+). Its pathway is one-carbon metabolism; tetrahydrofolate interconversion. In terms of biological role, catalyzes the oxidation of 5,10-methylenetetrahydrofolate to 5,10-methenyltetrahydrofolate and then the hydrolysis of 5,10-methenyltetrahydrofolate to 10-formyltetrahydrofolate. In Protochlamydia amoebophila (strain UWE25), this protein is Bifunctional protein FolD.